The primary structure comprises 263 residues: Acyl-[acyl-carrier-protein]--UDP-N-acetylglucosamine O-acyltransferase (263 aa).

Belongs to the transferase hexapeptide repeat family. LpxA subfamily. As to quaternary structure, homotrimer.

It is found in the cytoplasm. It carries out the reaction a (3R)-hydroxyacyl-[ACP] + UDP-N-acetyl-alpha-D-glucosamine = a UDP-3-O-[(3R)-3-hydroxyacyl]-N-acetyl-alpha-D-glucosamine + holo-[ACP]. It participates in glycolipid biosynthesis; lipid IV(A) biosynthesis; lipid IV(A) from (3R)-3-hydroxytetradecanoyl-[acyl-carrier-protein] and UDP-N-acetyl-alpha-D-glucosamine: step 1/6. Functionally, involved in the biosynthesis of lipid A, a phosphorylated glycolipid that anchors the lipopolysaccharide to the outer membrane of the cell. The protein is Acyl-[acyl-carrier-protein]--UDP-N-acetylglucosamine O-acyltransferase of Xanthomonas euvesicatoria pv. vesicatoria (strain 85-10) (Xanthomonas campestris pv. vesicatoria).